A 736-amino-acid polypeptide reads, in one-letter code: Phosphoribosylformylglycinamidine synthase subunit PurL (736 aa).

His49 is a catalytic residue. The ATP site is built by Tyr52 and Lys91. Position 93 (Glu93) interacts with Mg(2+). Substrate-binding positions include Ser94–His97 and Arg116. Residue His95 is the Proton acceptor of the active site. Asp117 is a binding site for Mg(2+). Residue Gln240 participates in substrate binding. Asp268 contacts Mg(2+). Glu312–Gln314 provides a ligand contact to substrate. Residues Asp493 and Gly530 each coordinate ATP. Residue Asn531 coordinates Mg(2+). Substrate is bound at residue Ser533.

This sequence belongs to the FGAMS family. In terms of assembly, monomer. Part of the FGAM synthase complex composed of 1 PurL, 1 PurQ and 2 PurS subunits.

Its subcellular location is the cytoplasm. The catalysed reaction is N(2)-formyl-N(1)-(5-phospho-beta-D-ribosyl)glycinamide + L-glutamine + ATP + H2O = 2-formamido-N(1)-(5-O-phospho-beta-D-ribosyl)acetamidine + L-glutamate + ADP + phosphate + H(+). The protein operates within purine metabolism; IMP biosynthesis via de novo pathway; 5-amino-1-(5-phospho-D-ribosyl)imidazole from N(2)-formyl-N(1)-(5-phospho-D-ribosyl)glycinamide: step 1/2. Its function is as follows. Part of the phosphoribosylformylglycinamidine synthase complex involved in the purines biosynthetic pathway. Catalyzes the ATP-dependent conversion of formylglycinamide ribonucleotide (FGAR) and glutamine to yield formylglycinamidine ribonucleotide (FGAM) and glutamate. The FGAM synthase complex is composed of three subunits. PurQ produces an ammonia molecule by converting glutamine to glutamate. PurL transfers the ammonia molecule to FGAR to form FGAM in an ATP-dependent manner. PurS interacts with PurQ and PurL and is thought to assist in the transfer of the ammonia molecule from PurQ to PurL. The chain is Phosphoribosylformylglycinamidine synthase subunit PurL from Rhodopseudomonas palustris (strain BisB18).